A 196-amino-acid polypeptide reads, in one-letter code: Ribosome maturation factor RimP (196 aa).

Residues 176–196 form a disordered region; it reads ETNFDEVSTELETDTPSEGDQ. A compositionally biased stretch (acidic residues) spans 177–196; the sequence is TNFDEVSTELETDTPSEGDQ.

The protein belongs to the RimP family.

The protein resides in the cytoplasm. Functionally, required for maturation of 30S ribosomal subunits. This is Ribosome maturation factor RimP from Roseobacter denitrificans (strain ATCC 33942 / OCh 114) (Erythrobacter sp. (strain OCh 114)).